The sequence spans 113 residues: Colicin-E1 immunity protein (113 aa).

Its function is as follows. This protein is able to protect a cell, which harbors the plasmid ColE1 encoding colicin E1, against colicin E1. This Escherichia coli protein is Colicin-E1 immunity protein (imm).